Here is a 228-residue protein sequence, read N- to C-terminus: Cytochrome c oxidase subunit 2 (228 aa).

Residues 1–14 (MANHSQLGFQDASS) are Mitochondrial intermembrane-facing. Residues 15–45 (PIMEELVEFHDHALIVALAICSLVLYLLAHM) form a helical membrane-spanning segment. Topologically, residues 46–58 (LMEKLSSNAVDAQ) are mitochondrial matrix. A helical membrane pass occupies residues 59–86 (EVELIWTILPAIVLVLLALPSLQILYMM). At 87–228 (DEIDEPDLTL…ETWSSLLSAS (142 aa)) the chain is on the mitochondrial intermembrane side. Cu cation contacts are provided by His160, Cys195, Glu197, Cys199, His203, and Met206. Glu197 contributes to the Mg(2+) binding site.

This sequence belongs to the cytochrome c oxidase subunit 2 family. In terms of assembly, component of the cytochrome c oxidase (complex IV, CIV), a multisubunit enzyme composed of 14 subunits. The complex is composed of a catalytic core of 3 subunits MT-CO1, MT-CO2 and MT-CO3, encoded in the mitochondrial DNA, and 11 supernumerary subunits COX4I, COX5A, COX5B, COX6A, COX6B, COX6C, COX7A, COX7B, COX7C, COX8 and NDUFA4, which are encoded in the nuclear genome. The complex exists as a monomer or a dimer and forms supercomplexes (SCs) in the inner mitochondrial membrane with NADH-ubiquinone oxidoreductase (complex I, CI) and ubiquinol-cytochrome c oxidoreductase (cytochrome b-c1 complex, complex III, CIII), resulting in different assemblies (supercomplex SCI(1)III(2)IV(1) and megacomplex MCI(2)III(2)IV(2)). Found in a complex with TMEM177, COA6, COX18, COX20, SCO1 and SCO2. Interacts with TMEM177 in a COX20-dependent manner. Interacts with COX20. Interacts with COX16. The cofactor is Cu cation.

It is found in the mitochondrion inner membrane. It catalyses the reaction 4 Fe(II)-[cytochrome c] + O2 + 8 H(+)(in) = 4 Fe(III)-[cytochrome c] + 2 H2O + 4 H(+)(out). Its function is as follows. Component of the cytochrome c oxidase, the last enzyme in the mitochondrial electron transport chain which drives oxidative phosphorylation. The respiratory chain contains 3 multisubunit complexes succinate dehydrogenase (complex II, CII), ubiquinol-cytochrome c oxidoreductase (cytochrome b-c1 complex, complex III, CIII) and cytochrome c oxidase (complex IV, CIV), that cooperate to transfer electrons derived from NADH and succinate to molecular oxygen, creating an electrochemical gradient over the inner membrane that drives transmembrane transport and the ATP synthase. Cytochrome c oxidase is the component of the respiratory chain that catalyzes the reduction of oxygen to water. Electrons originating from reduced cytochrome c in the intermembrane space (IMS) are transferred via the dinuclear copper A center (CU(A)) of subunit 2 and heme A of subunit 1 to the active site in subunit 1, a binuclear center (BNC) formed by heme A3 and copper B (CU(B)). The BNC reduces molecular oxygen to 2 water molecules using 4 electrons from cytochrome c in the IMS and 4 protons from the mitochondrial matrix. This is Cytochrome c oxidase subunit 2 (MT-CO2) from Cairina moschata (Muscovy duck).